Here is a 174-residue protein sequence, read N- to C-terminus: Large ribosomal subunit protein uL18 (174 aa).

This sequence belongs to the universal ribosomal protein uL18 family. In terms of assembly, part of the 50S ribosomal subunit. Contacts the 5S and 23S rRNAs.

Its function is as follows. This is one of the proteins that bind and probably mediate the attachment of the 5S RNA into the large ribosomal subunit, where it forms part of the central protuberance. The chain is Large ribosomal subunit protein uL18 from Methanosarcina mazei (strain ATCC BAA-159 / DSM 3647 / Goe1 / Go1 / JCM 11833 / OCM 88) (Methanosarcina frisia).